The following is a 228-amino-acid chain: Heptaprenylglyceryl phosphate synthase (228 aa).

Lys12 lines the sn-glycerol 1-phosphate pocket. 2 residues coordinate Mg(2+): Asp14 and Thr40. Sn-glycerol 1-phosphate contacts are provided by residues 159–164, Gly189, and 209–210; these read YLEYSG and GN.

This sequence belongs to the GGGP/HepGP synthase family. Group I subfamily. Homodimer. It depends on Mg(2+) as a cofactor.

It catalyses the reaction sn-glycerol 1-phosphate + all-trans-heptaprenyl diphosphate = 3-heptaprenyl-sn-glycero-1-phosphate + diphosphate. It functions in the pathway membrane lipid metabolism; glycerophospholipid metabolism. Its function is as follows. Prenyltransferase that catalyzes in vivo the transfer of the heptaprenyl moiety of heptaprenyl pyrophosphate (HepPP; 35 carbon atoms) to the C3 hydroxyl of sn-glycerol-1-phosphate (G1P), producing heptaprenylglyceryl phosphate (HepGP). This reaction is an ether-bond-formation step in the biosynthesis of archaea-type G1P-based membrane lipids found in Bacillales. The sequence is that of Heptaprenylglyceryl phosphate synthase from Geobacillus sp. (strain WCH70).